A 127-amino-acid polypeptide reads, in one-letter code: Small ribosomal subunit protein uS12 (127 aa).

At aspartate 89 the chain carries 3-methylthioaspartic acid.

It belongs to the universal ribosomal protein uS12 family. As to quaternary structure, part of the 30S ribosomal subunit. Contacts proteins S8 and S17. May interact with IF1 in the 30S initiation complex.

Its function is as follows. With S4 and S5 plays an important role in translational accuracy. Functionally, interacts with and stabilizes bases of the 16S rRNA that are involved in tRNA selection in the A site and with the mRNA backbone. Located at the interface of the 30S and 50S subunits, it traverses the body of the 30S subunit contacting proteins on the other side and probably holding the rRNA structure together. The combined cluster of proteins S8, S12 and S17 appears to hold together the shoulder and platform of the 30S subunit. The chain is Small ribosomal subunit protein uS12 from Nautilia profundicola (strain ATCC BAA-1463 / DSM 18972 / AmH).